A 230-amino-acid chain; its full sequence is Androgen-dependent TFPI-regulating protein (230 aa).

At 1 to 7 the chain is on the cytoplasmic side; that stretch reads MTKTTTC. The helical transmembrane segment at 8 to 28 threads the bilayer; the sequence is VYHFLVLNWYIFLNYHIPQIG. The Extracellular segment spans residues 29–45; sequence RNEEKLREFHDGGRSKY. A helical membrane pass occupies residues 46-66; it reads LTLLNLLLQAIFFGVACLDDV. Residues 67-85 are Cytoplasmic-facing; it reads LKRVIGRKDIKFVTSFRDL. A helical membrane pass occupies residues 86–106; it reads LFTTMAFPISTFVFLVFWTLF. Residues 107–120 are Extracellular-facing; sequence HYDRSLVYPKGLDD. The helical transmembrane segment at 121 to 141 threads the bilayer; the sequence is FFPAWVNHAMHTSIFPFSLFE. The Cytoplasmic segment spans residues 142–154; sequence TILRPHNYPSKKL. Residues 155-175 traverse the membrane as a helical segment; that stretch reads GLTLLGAFNFAYIIRILWRYV. Residues 176 to 190 lie on the Extracellular side of the membrane; sequence QTGNWVYPVFDSLSP. The helical transmembrane segment at 191–211 threads the bilayer; the sequence is LGIIIFFSAAYILVAGIYLFG. The Cytoplasmic segment spans residues 212–230; that stretch reads EKINHWKWGAIAKPQMKKN.

This sequence belongs to the AIG1 family.

It localises to the cell membrane. The catalysed reaction is 9-hexadecanoyloxy-octadecanoate + H2O = 9-hydroxy-octadecanoate + hexadecanoate + H(+). The enzyme catalyses 12-hexadecanoyloxy-octadecanoate + H2O = 12-hydroxyoctadecanoate + hexadecanoate + H(+). It catalyses the reaction 9-(9Z-hexadecenoyloxy)-octadecanoate + H2O = (9Z)-hexadecenoate + 9-hydroxy-octadecanoate + H(+). It carries out the reaction 12-(9Z-hexadecenoyloxy)-octadecanoate + H2O = 12-hydroxyoctadecanoate + (9Z)-hexadecenoate + H(+). The catalysed reaction is 13-(9Z-hexadecenoyloxy)-octadecanoate + H2O = 13-hydroxy-octadecanoate + (9Z)-hexadecenoate + H(+). The enzyme catalyses 9-octadecanoyloxy-octadecanoate + H2O = 9-hydroxy-octadecanoate + octadecanoate + H(+). It catalyses the reaction 12-octadecanoyloxy-octadecanoate + H2O = 12-hydroxyoctadecanoate + octadecanoate + H(+). It carries out the reaction 13-octadecanoyloxy-octadecanoate + H2O = 13-hydroxy-octadecanoate + octadecanoate + H(+). The catalysed reaction is 9-(9Z-octadecenoyloxy)-octadecanoate + H2O = 9-hydroxy-octadecanoate + (9Z)-octadecenoate + H(+). The enzyme catalyses 12-(9Z-octadecenoyloxy)-octadecanoate + H2O = 12-hydroxyoctadecanoate + (9Z)-octadecenoate + H(+). It catalyses the reaction 13-(9Z-octadecenoyloxy)-octadecanoate + H2O = 13-hydroxy-octadecanoate + (9Z)-octadecenoate + H(+). It carries out the reaction 5-(9Z-octadecenoyloxy)-octadecanoate + H2O = 5-hydroxy-octadecanoate + (9Z)-octadecenoate + H(+). Hydrolyzes bioactive fatty-acid esters of hydroxy-fatty acids (FAHFAs), but not other major classes of lipids. Shows a preference for FAHFAs with branching distal from the carboxylate head group of the lipids. Regulates the expression and the cell-associated anticoagulant activity of the inhibitor TFPI in endothelial cells (in vitro). This Mus musculus (Mouse) protein is Androgen-dependent TFPI-regulating protein (Adtrp).